The sequence spans 504 residues: Anaerobic nitric oxide reductase transcription regulator NorR (504 aa).

Aspartate 57 bears the 4-aspartylphosphate mark. Residues 187-416 (MIGLSPGMTQ…LEHAIHRAVV (230 aa)) form the Sigma-54 factor interaction domain. ATP-binding positions include 215–222 (GETGTGKE) and 278–287 (ADNGTLFLDE). Positions 479–498 (WAACARMLETDVANLHRLAK) form a DNA-binding region, H-T-H motif.

Its pathway is nitrogen metabolism; nitric oxide reduction. Functionally, required for the expression of anaerobic nitric oxide (NO) reductase, acts as a transcriptional activator for at least the norVW operon. Activation also requires sigma-54. The chain is Anaerobic nitric oxide reductase transcription regulator NorR from Escherichia coli O81 (strain ED1a).